The primary structure comprises 262 residues: DNA-directed RNA polymerase subunit Rpo3 (262 aa).

The protein belongs to the archaeal Rpo3/eukaryotic RPB3 RNA polymerase subunit family. Part of the RNA polymerase complex.

Its subcellular location is the cytoplasm. It catalyses the reaction RNA(n) + a ribonucleoside 5'-triphosphate = RNA(n+1) + diphosphate. DNA-dependent RNA polymerase (RNAP) catalyzes the transcription of DNA into RNA using the four ribonucleoside triphosphates as substrates. The protein is DNA-directed RNA polymerase subunit Rpo3 of Pyrobaculum islandicum (strain DSM 4184 / JCM 9189 / GEO3).